Consider the following 453-residue polypeptide: Homogentisate 1,2-dioxygenase (453 aa).

His306 functions as the Proton acceptor in the catalytic mechanism. Residues His349 and Glu355 each coordinate Fe cation. Residues Tyr364 and His385 each coordinate homogentisate. Residue His385 coordinates Fe cation.

It belongs to the homogentisate dioxygenase family. As to quaternary structure, hexamer; dimer of trimers. The cofactor is Fe cation.

It catalyses the reaction homogentisate + O2 = 4-maleylacetoacetate + H(+). The protein operates within amino-acid degradation; L-phenylalanine degradation; acetoacetate and fumarate from L-phenylalanine: step 4/6. Involved in the catabolism of homogentisate (2,5-dihydroxyphenylacetate or 2,5-OH-PhAc), a central intermediate in the degradation of phenylalanine and tyrosine. Catalyzes the oxidative ring cleavage of the aromatic ring of homogentisate to yield maleylacetoacetate. The protein is Homogentisate 1,2-dioxygenase of Rhizobium etli (strain CIAT 652).